Reading from the N-terminus, the 251-residue chain is Hydroxyacylglutathione hydrolase (251 aa).

Zn(2+)-binding residues include His-53, His-55, Asp-57, His-58, His-110, Asp-127, and His-165.

This sequence belongs to the metallo-beta-lactamase superfamily. Glyoxalase II family. Monomer. Requires Zn(2+) as cofactor.

It catalyses the reaction an S-(2-hydroxyacyl)glutathione + H2O = a 2-hydroxy carboxylate + glutathione + H(+). Its pathway is secondary metabolite metabolism; methylglyoxal degradation; (R)-lactate from methylglyoxal: step 2/2. In terms of biological role, thiolesterase that catalyzes the hydrolysis of S-D-lactoyl-glutathione to form glutathione and D-lactic acid. This chain is Hydroxyacylglutathione hydrolase, found in Citrobacter koseri (strain ATCC BAA-895 / CDC 4225-83 / SGSC4696).